Here is a 21-residue protein sequence, read N- to C-terminus: Bombinin-H1/H3 (21 aa).

Residue isoleucine 2 is modified to D-allo-isoleucine; in form H3. An Isoleucine amide modification is found at isoleucine 20.

Belongs to the bombinin family. As to expression, expressed by the skin glands.

The protein resides in the secreted. In terms of biological role, has antimicrobial and hemolytic activities. The chain is Bombinin-H1/H3 from Bombina variegata (Yellow-bellied toad).